Here is a 257-residue protein sequence, read N- to C-terminus: UPF0246 protein Spro_0686 (257 aa).

The protein belongs to the UPF0246 family.

The polypeptide is UPF0246 protein Spro_0686 (Serratia proteamaculans (strain 568)).